The sequence spans 472 residues: 7-dimethylallyltryptophan synthase hasE (472 aa).

Glu-138 is a binding site for L-tryptophan. Dimethylallyl diphosphate contacts are provided by Arg-154, Lys-239, Tyr-241, Lys-313, Tyr-315, Tyr-393, Tyr-460, and Tyr-464.

Belongs to the tryptophan dimethylallyltransferase family. In terms of assembly, homodimer.

It carries out the reaction L-tryptophan + dimethylallyl diphosphate = 7-(3-methylbut-2-enyl)-L-tryptophan + diphosphate. It catalyses the reaction an N-terminal L-tryptophanyl-L-alpha-aminoacyl-[peptide] + H2O = an N-terminal L-alpha-aminoacyl-[peptide] + L-tryptophan. It participates in secondary metabolite biosynthesis. In terms of biological role, 7-dimethylallyltryptophan synthase; part of the gene cluster that mediates the biosynthesis of hexadehydro-astechrome (HAS), a tryptophan-derived iron(III)-complex that acts as a virulence factor in infected mice. Catalyzes the prenylation of L-tryptophan at the C-7 position of the indole moiety. The enzyme is specific for dimethylallyl diphosphate (DMAPP) as prenyl donor. Also accepts D-tryptophan, typtophan-derivatives with modifications at the side chain or the indole ring, and linear and cyclic dipeptides such as H-L-Trp-L-Gly-OH or cyclo-L-Trp-L-Gly as substrates, however with lower efficiency. Also has tryptophan aminopeptidase activity towards linear peptides with a tryptophanyl moiety at the N-terminus. Dipeptides are better substrates than peptides with 3 or more amino acids. Enzymatic rate constants however are much higher for the prenyltransferase activity than for the aminopeptidase activity. Within the hexadehydro-astechrome biosyntetic pathway, hasE catalyzes the prenylation of the hasD-tethered tryptophan or the resulting tethered Trp-Ala dipeptid. The HAS biosynthesis begins with the synthesis of a tethered Trp-Ala dipeptide by the NRPS hasD. The 7-dimethylallyltryptophan synthase hasE then catalyzes the prenylation of the hasD-tethered tryptophan or the resulting tethered Trp-Ala dipeptide at the C-7 position of the indole moiety. HAS biosynthesis continues via tethered intermediates with the succesive actions of the cytochrome P450 monooxygenase hasH, the O-methyltransferase hasC, and the FAD-linked oxidoreductase hasG. The resulting O-methylated diketopiperazine is then released from hasD. Finally, three O-methylated diketopiperazine molecules assemble in a trimeric complex with Fe(III) to produce hexadehydro-astechrome. The chain is 7-dimethylallyltryptophan synthase hasE from Aspergillus fumigatus (strain CBS 144.89 / FGSC A1163 / CEA10) (Neosartorya fumigata).